The primary structure comprises 271 residues: Acetylglutamate kinase (271 aa).

Residues 41 to 42 (GG), R63, and N166 contribute to the substrate site.

It belongs to the acetylglutamate kinase family. ArgB subfamily.

It is found in the cytoplasm. The catalysed reaction is N-acetyl-L-glutamate + ATP = N-acetyl-L-glutamyl 5-phosphate + ADP. The protein operates within amino-acid biosynthesis; L-arginine biosynthesis; N(2)-acetyl-L-ornithine from L-glutamate: step 2/4. Functionally, catalyzes the ATP-dependent phosphorylation of N-acetyl-L-glutamate. The sequence is that of Acetylglutamate kinase from Anaeromyxobacter sp. (strain Fw109-5).